Reading from the N-terminus, the 294-residue chain is Bifunctional protein FolD (294 aa).

NADP(+) contacts are provided by residues 171–173 (GRS), Ser-196, and Ile-237.

The protein belongs to the tetrahydrofolate dehydrogenase/cyclohydrolase family. In terms of assembly, homodimer.

It carries out the reaction (6R)-5,10-methylene-5,6,7,8-tetrahydrofolate + NADP(+) = (6R)-5,10-methenyltetrahydrofolate + NADPH. The enzyme catalyses (6R)-5,10-methenyltetrahydrofolate + H2O = (6R)-10-formyltetrahydrofolate + H(+). It functions in the pathway one-carbon metabolism; tetrahydrofolate interconversion. Functionally, catalyzes the oxidation of 5,10-methylenetetrahydrofolate to 5,10-methenyltetrahydrofolate and then the hydrolysis of 5,10-methenyltetrahydrofolate to 10-formyltetrahydrofolate. The protein is Bifunctional protein FolD of Synechocystis sp. (strain ATCC 27184 / PCC 6803 / Kazusa).